Reading from the N-terminus, the 336-residue chain is NADH-quinone oxidoreductase subunit H (336 aa).

Transmembrane regions (helical) follow at residues 4 to 24 (YILWTALYVLLIVIPLILVVA), 75 to 95 (YLFFIAPILAFAPAYAAWAVI), 108 to 128 (LGLLYILAMTSFSVYGIVIAG), 154 to 174 (MGFAIVGVVIAAGSMGITGII), 181 to 201 (LWHWYFIPLFPLFVVYFIAGI), 233 to 253 (LFFLAEYANMILISILTSIMF), 272 to 292 (FVPGVVWLFAKTGIFMFMFLW), and 308 to 328 (LGWKIFIPLTFVWVVVVACMV).

This sequence belongs to the complex I subunit 1 family. NDH-1 is composed of 14 different subunits. Subunits NuoA, H, J, K, L, M, N constitute the membrane sector of the complex.

It localises to the cell inner membrane. It carries out the reaction a quinone + NADH + 5 H(+)(in) = a quinol + NAD(+) + 4 H(+)(out). NDH-1 shuttles electrons from NADH, via FMN and iron-sulfur (Fe-S) centers, to quinones in the respiratory chain. The immediate electron acceptor for the enzyme in this species is believed to be ubiquinone. Couples the redox reaction to proton translocation (for every two electrons transferred, four hydrogen ions are translocated across the cytoplasmic membrane), and thus conserves the redox energy in a proton gradient. This subunit may bind ubiquinone. The chain is NADH-quinone oxidoreductase subunit H from Francisella philomiragia subsp. philomiragia (strain ATCC 25017 / CCUG 19701 / FSC 153 / O#319-036).